A 142-amino-acid polypeptide reads, in one-letter code: MMSFVSLLLVGILFHATQAEQLTKCEVFQKLKDLKDYGGVSLPEWVCTAFHTSGYDTQAIVQNNDSTEYGLFQINNKIWCKDDQNPHSRNICNISCDKFLDDDLTDDIVCAKKILDKVGINYWLAHKALCSEKLDQWLCEKL.

A signal peptide spans 1 to 19 (MMSFVSLLLVGILFHATQA). Residues 20 to 142 (EQLTKCEVFQ…KLDQWLCEKL (123 aa)) enclose the C-type lysozyme domain. Intrachain disulfides connect Cys-25–Cys-139, Cys-47–Cys-130, Cys-80–Cys-96, and Cys-92–Cys-110. 2 N-linked (GlcNAc...) asparagine glycosylation sites follow: Asn-64 and Asn-93. Ca(2+) is bound by residues Lys-98, Asp-101, Asp-103, Asp-106, and Asp-107.

This sequence belongs to the glycosyl hydrolase 22 family. In terms of assembly, lactose synthase (LS) is a heterodimer of a catalytic component, beta1,4-galactosyltransferase (beta4Gal-T1) and a regulatory component, alpha-lactalbumin (LA). In terms of tissue distribution, mammary gland specific. Secreted in milk.

It localises to the secreted. Functionally, regulatory subunit of lactose synthase, changes the substrate specificity of galactosyltransferase in the mammary gland making glucose a good acceptor substrate for this enzyme. This enables LS to synthesize lactose, the major carbohydrate component of milk. In other tissues, galactosyltransferase transfers galactose onto the N-acetylglucosamine of the oligosaccharide chains in glycoproteins. This is Alpha-lactalbumin (LALBA) from Capra hircus (Goat).